The following is a 444-amino-acid chain: Docking protein 3 (444 aa).

The region spanning proline 7 to phenylalanine 123 is the PH domain. Serine 138 is modified (phosphoserine). The IRS-type PTB domain maps to glutamate 157–leucine 261. At serine 274 the chain carries Phosphoserine. The segment at leucine 278–leucine 299 is disordered. 2 positions are modified to phosphoserine: serine 308 and serine 314. Tyrosine 325 is modified (phosphotyrosine). The disordered stretch occupies residues glycine 354–alanine 390. Residues glycine 358–proline 376 show a composition bias toward low complexity. Position 371 is a phosphoserine (serine 371).

This sequence belongs to the DOK family. Type A subfamily. In terms of assembly, on tyrosine phosphorylation, interacts with CSK and INPP5D/SHIP1 via their SH2 domains. Both Tyr-325 and Tyr-343 are required for interaction with INPP5D. Only Tyr-325 is required for interaction with CSK. Binds ABL1 through the PTB domain and in a kinase-dependent manner. Does not interact with RasGAP. Constitutively tyrosine-phosphorylated. Post-translationally, on IL2 stimulation, phosphorylated on C-terminal tyrosine residues possibly by Src kinases. Can also be phosphorylated by ABL1 kinase. Predominantly expressed in bone marrow, spleen and lung. Low levels in heart, brain, liver, muscle, thymus, kidney and testis. Highly expressed in B-cells and macrophages.

The protein resides in the cytoplasm. The protein localises to the cell membrane. DOK proteins are enzymatically inert adaptor or scaffolding proteins. They provide a docking platform for the assembly of multimolecular signaling complexes. DOK3 is a negative regulator of JNK signaling in B-cells through interaction with INPP5D/SHIP1. May modulate ABL1 function. The chain is Docking protein 3 (Dok3) from Mus musculus (Mouse).